The sequence spans 130 residues: Protachykinin-1 (130 aa).

Residues 1 to 19 (MKILVAVAVIFFISTQLSA) form the signal peptide. Residues 20 to 56 (EEIGANDDFNYWSDWSDSDQIKEEMPEPFEHLLQRIA) constitute a propeptide that is removed on maturation. 2 positions are modified to methionine amide: M68 and M107.

The protein belongs to the tachykinin family. Post-translationally, the substance P form is cleaved at Pro-59 by the prolyl endopeptidase FAP (seprase) activity (in vitro). Substance P is also cleaved and degraded by Angiotensin-converting enzyme (ACE) and neprilysin (MME).

It is found in the secreted. Tachykinins are active peptides which excite neurons, evoke behavioral responses, are potent vasodilators and secretagogues, and contract (directly or indirectly) many smooth muscles. The sequence is that of Protachykinin-1 (TAC1) from Bos taurus (Bovine).